An 88-amino-acid chain; its full sequence is Large ribosomal subunit protein eL34 (88 aa).

The protein belongs to the eukaryotic ribosomal protein eL34 family.

This is Large ribosomal subunit protein eL34 from Methanobrevibacter smithii (strain ATCC 35061 / DSM 861 / OCM 144 / PS).